Here is a 129-residue protein sequence, read N- to C-terminus: Lysozyme C (129 aa).

Positions 1 to 129 (KVYGRCELAA…VNAWIRGCRL (129 aa)) constitute a C-type lysozyme domain. 4 disulfide bridges follow: cysteine 6–cysteine 127, cysteine 30–cysteine 115, cysteine 64–cysteine 80, and cysteine 76–cysteine 94. Active-site residues include glutamate 35 and aspartate 52.

Belongs to the glycosyl hydrolase 22 family. As to quaternary structure, monomer.

The protein localises to the secreted. The catalysed reaction is Hydrolysis of (1-&gt;4)-beta-linkages between N-acetylmuramic acid and N-acetyl-D-glucosamine residues in a peptidoglycan and between N-acetyl-D-glucosamine residues in chitodextrins.. Functionally, lysozymes have primarily a bacteriolytic function; those in tissues and body fluids are associated with the monocyte-macrophage system and enhance the activity of immunoagents. The polypeptide is Lysozyme C (LYZ) (Syrmaticus reevesii (Reeves's pheasant)).